The following is a 326-amino-acid chain: MAAISPLFLLFLIPIIPLSLLAILALIVRPRPIKIPIKSRHAFITGGSSGIGLALAHRAASEGARVSILARSGSKLEEAKKSIQLATGVEVATFSADVRDYDAVSKAIDESGPIDVLIVNQGVFTAKELVKHSPEDVKFTIDVNLVGSFNVIKAALPAMKARKDRGPASISLVSSQAGQVGVYGYAAYSASKFGLQGLAQALQQEVISDDIHVTLIFPPDTNTPGFEEEQKSRPEVTAIIAASSGSMETEEVAKKAMDGIKAGNFTVSCNFEGFLLSLATTGMSPQRSFWLAFLEVITAGPIRLIALFFQWDWYKAIEKWSKTKTK.

Over 1–7 (MAAISPL) the chain is Lumenal. The chain crosses the membrane as a helical span at residues 8 to 28 (FLLFLIPIIPLSLLAILALIV). The Cytoplasmic portion of the chain corresponds to 29-264 (RPRPIKIPIK…KAMDGIKAGN (236 aa)). NADPH-binding residues include glycine 46, serine 48, serine 49, glycine 50, arginine 71, lysine 75, and aspartate 97. Residues 46–50 (GGSSG) carry the GXSXG motif. Serine 174 acts as the Proton donor in catalysis. The active-site Proton acceptor is tyrosine 188. Tyrosine 188 and lysine 192 together coordinate NADP(+). Catalysis depends on lysine 192, which acts as the Lowers pKa of active site Tyr. Residues 265–285 (FTVSCNFEGFLLSLATTGMSP) traverse the membrane as a helical segment. Topologically, residues 286-288 (QRS) are lumenal. A helical membrane pass occupies residues 289-309 (FWLAFLEVITAGPIRLIALFF). At 310 to 326 (QWDWYKAIEKWSKTKTK) the chain is on the cytoplasmic side.

Belongs to the short-chain dehydrogenases/reductases (SDR) family. Expressed in roots, leaves, stems, flowers and siliques.

The protein localises to the endoplasmic reticulum membrane. It catalyses the reaction sphinganine + NADP(+) = 3-oxosphinganine + NADPH + H(+). The protein operates within lipid metabolism; sphingolipid metabolism. Its function is as follows. Catalyzes the reduction of 3'-oxosphinganine (3-ketodihydrosphingosine/KDS) to sphinganine (dihydrosphingosine/DHS), the second step of de novo sphingolipid biosynthesis. In plants, sphingolipids seems to play a critical role in mineral ion homeostasis, most likely through their involvement in the ion transport functionalities of membrane systems in the root. Lacks stereospecificity and can also produce L-threo-DHS in addition to D-erythro-DHS. This chain is 3-dehydrosphinganine reductase TSC10A (TSC10A), found in Arabidopsis thaliana (Mouse-ear cress).